The following is a 63-amino-acid chain: Large ribosomal subunit protein bL32 (63 aa).

The tract at residues 1 to 23 (MATPKAKVSKSRRDKRRAQFTAR) is disordered. Positions 7-18 (KVSKSRRDKRRA) are enriched in basic residues.

The protein belongs to the bacterial ribosomal protein bL32 family.

This Prosthecochloris aestuarii (strain DSM 271 / SK 413) protein is Large ribosomal subunit protein bL32.